The chain runs to 273 residues: Large ribosomal subunit protein uL2cz/uL2cy (273 aa).

2 disordered regions span residues 1–23 and 224–273; these read MAIHLYKTSTSSTRNGAVDSQVK and NPVD…RRRK. The segment covering 262-273 has biased composition (basic and acidic residues); that stretch reads KYSDRFILRRRK.

Belongs to the universal ribosomal protein uL2 family. Part of the 50S ribosomal subunit.

The protein localises to the plastid. It localises to the chloroplast. This chain is Large ribosomal subunit protein uL2cz/uL2cy (rpl2-A), found in Acorus calamus var. americanus (American sweet flag).